We begin with the raw amino-acid sequence, 299 residues long: Nucleophosmin (299 aa).

A compositionally biased stretch (acidic residues) spans Glu-125–His-134. The interval Glu-125–Glu-247 is disordered. Positions Pro-153–Arg-158 match the Nuclear localization signal motif. Acidic residues predominate over residues Glu-160 to Glu-187. Residues Thr-188–Lys-197 are compositionally biased toward basic and acidic residues. Positions Pro-189–Ser-195 match the Nuclear localization signal motif. 4 consecutive repeats follow at residues Lys-218 to Pro-220, Lys-221 to Pro-223, Lys-237 to Pro-239, and Lys-240 to Pro-242. The interval Lys-218–Pro-242 is 4 X 3 AA repeats of K-T-P. The span at Lys-221–Thr-231 shows a compositional bias: basic and acidic residues. Low complexity predominate over residues Lys-232–Pro-242.

The protein belongs to the nucleoplasmin family. As to quaternary structure, decamer formed by two pentameric rings associated in a head-to-head fashion. Phosphorylated.

The protein resides in the cytoplasm. Its subcellular location is the nucleus. It is found in the nucleoplasm. The protein localises to the nucleolus. Functionally, acts as a chaperonin for the core histones H3, H2B and H4. Associated with nucleolar ribonucleoprotein structures and bind single-stranded nucleic acids. It may function in the assembly and/or transport of ribosome. May stimulate endonuclease activity on apurinic/apyrimidinic (AP) double-stranded DNA. May inhibit endonuclease activity on AP single-stranded RNA. This Xenopus laevis (African clawed frog) protein is Nucleophosmin (npm1).